Consider the following 78-residue polypeptide: D-alanyl carrier protein (78 aa).

One can recognise a Carrier domain in the interval 1 to 78 (MDFNQEVLSV…QIIKQLNELR (78 aa)). Ser-36 carries the O-(pantetheine 4'-phosphoryl)serine modification.

It belongs to the DltC family. Post-translationally, 4'-phosphopantetheine is transferred from CoA to a specific serine of apo-DCP.

The protein resides in the cytoplasm. It functions in the pathway cell wall biogenesis; lipoteichoic acid biosynthesis. Functionally, carrier protein involved in the D-alanylation of lipoteichoic acid (LTA). The loading of thioester-linked D-alanine onto DltC is catalyzed by D-alanine--D-alanyl carrier protein ligase DltA. The DltC-carried D-alanyl group is further transferred to cell membrane phosphatidylglycerol (PG) by forming an ester bond, probably catalyzed by DltD. D-alanylation of LTA plays an important role in modulating the properties of the cell wall in Gram-positive bacteria, influencing the net charge of the cell wall. This Bacillus licheniformis (strain ATCC 14580 / DSM 13 / JCM 2505 / CCUG 7422 / NBRC 12200 / NCIMB 9375 / NCTC 10341 / NRRL NRS-1264 / Gibson 46) protein is D-alanyl carrier protein.